Here is a 230-residue protein sequence, read N- to C-terminus: ATP-dependent dethiobiotin synthetase BioD (230 aa).

Residue 12–17 participates in ATP binding; the sequence is DIGKTH. Threonine 16 lines the Mg(2+) pocket. The active site involves lysine 37. Position 41 (serine 41) interacts with substrate. ATP is bound by residues aspartate 52, 115–118, and 175–176; these read EGAG and SE. Residues aspartate 52 and glutamate 115 each coordinate Mg(2+).

The protein belongs to the dethiobiotin synthetase family. In terms of assembly, homodimer. It depends on Mg(2+) as a cofactor.

It is found in the cytoplasm. The enzyme catalyses (7R,8S)-7,8-diammoniononanoate + CO2 + ATP = (4R,5S)-dethiobiotin + ADP + phosphate + 3 H(+). Its pathway is cofactor biosynthesis; biotin biosynthesis; biotin from 7,8-diaminononanoate: step 1/2. In terms of biological role, catalyzes a mechanistically unusual reaction, the ATP-dependent insertion of CO2 between the N7 and N8 nitrogen atoms of 7,8-diaminopelargonic acid (DAPA, also called 7,8-diammoniononanoate) to form a ureido ring. This Caulobacter sp. (strain K31) protein is ATP-dependent dethiobiotin synthetase BioD.